Consider the following 402-residue polypeptide: Protein indeterminate-domain 12 (402 aa).

A disordered region spans residues threonine 47 to alanine 66. At serine 72 the chain carries Phosphoserine. 2 consecutive C2H2-type zinc fingers follow at residues phenylalanine 82–histidine 104 and tyrosine 124–histidine 154. The Nuclear localization signal signature appears at isoleucine 146–lysine 153. The segment at tryptophan 159–threonine 183 adopts a C2H2-type 2; degenerate zinc-finger fold. Residues cysteine 161, cysteine 164, histidine 177, cysteine 181, cysteine 188, cysteine 190, histidine 203, and cysteine 207 each contribute to the Zn(2+) site. Residues tyrosine 186–alanine 209 form a CCHC-type 2; atypical zinc finger. The interval arginine 196–aspartate 208 is SHR-binding.

It localises to the nucleus. Its function is as follows. Probable transcription factor. The sequence is that of Protein indeterminate-domain 12 from Arabidopsis thaliana (Mouse-ear cress).